The following is a 317-amino-acid chain: Long form salivary protein D7L2 (317 aa).

Positions 1–20 (MYKLLVALHLILCTVSHVKT) are cleaved as a signal peptide. Cystine bridges form between C39/C76, C72/C131, C181/C214, C195/C316, and C255/C266. Residues W58 and Y73 each contribute to the thromboxane A2 site. E182, Y264, D281, D284, and M308 together coordinate serotonin.

It belongs to the PBP/GOBP family. In terms of tissue distribution, female salivary gland.

Its subcellular location is the secreted. Its function is as follows. Modulates blood feeding of female mosquitoes on vertebrate species by binding and sequestering different mediators involved in the host response, such as biogenic amines and eicosanoids. Binds serotonin with high affinity. Binds tryptamine, octopamine, dopamine and noradrenaline with low affinity. Binds leukotriene C4, leukotriene D4, leukotriene E4 and U-46619, a stable analog of thromboxane A2. Does not bind leukotriene B4, adrenaline, histamine and ADP. Inhibits platelet aggregation induced by low concentrations of collagen and arachidonic acid but not by ADP or adrenaline. This Anopheles darlingi (Mosquito) protein is Long form salivary protein D7L2.